The following is a 653-amino-acid chain: 1-deoxy-D-xylulose-5-phosphate synthase (653 aa).

Thiamine diphosphate-binding positions include histidine 86 and 127-129 (GHS). Mg(2+) is bound at residue aspartate 158. Residues 159–160 (GA), asparagine 187, and phenylalanine 294 contribute to the thiamine diphosphate site. Asparagine 187 serves as a coordination point for Mg(2+). Residues 309 to 324 (KLEKTTSEPPPKKEPR) show a composition bias toward basic and acidic residues. The interval 309-343 (KLEKTTSEPPPKKEPRSPNAATAEPEAQPKPQPKP) is disordered. Residue glutamate 395 participates in thiamine diphosphate binding.

It belongs to the transketolase family. DXPS subfamily. Homodimer. It depends on Mg(2+) as a cofactor. Thiamine diphosphate is required as a cofactor.

The enzyme catalyses D-glyceraldehyde 3-phosphate + pyruvate + H(+) = 1-deoxy-D-xylulose 5-phosphate + CO2. Its pathway is metabolic intermediate biosynthesis; 1-deoxy-D-xylulose 5-phosphate biosynthesis; 1-deoxy-D-xylulose 5-phosphate from D-glyceraldehyde 3-phosphate and pyruvate: step 1/1. Catalyzes the acyloin condensation reaction between C atoms 2 and 3 of pyruvate and glyceraldehyde 3-phosphate to yield 1-deoxy-D-xylulose-5-phosphate (DXP). The protein is 1-deoxy-D-xylulose-5-phosphate synthase of Chromohalobacter salexigens (strain ATCC BAA-138 / DSM 3043 / CIP 106854 / NCIMB 13768 / 1H11).